We begin with the raw amino-acid sequence, 388 residues long: Transcriptional regulatory protein EmbR (388 aa).

Positions 2–105 (AGSATVEKRL…AAPPGYRLSI (104 aa)) form a DNA-binding region, ompR/PhoB-type. The FHA domain maps to 308–357 (TRIGRLHDNDIVLDSANVSRHHAVIVDTGTNYVINDLRSSNGVHVQHERI).

The protein belongs to the AfsR/DnrI/RedD regulatory family. Post-translationally, phosphorylated on threonine residue(s).

Its function is as follows. Positively regulates the transcription of the embCAB operon. Exhibits ATPase and GTPase activities. This is Transcriptional regulatory protein EmbR (embR) from Mycobacterium bovis (strain ATCC BAA-935 / AF2122/97).